Consider the following 229-residue polypeptide: Large ribosomal subunit protein uL1 (229 aa).

This sequence belongs to the universal ribosomal protein uL1 family. Part of the 50S ribosomal subunit.

Functionally, binds directly to 23S rRNA. The L1 stalk is quite mobile in the ribosome, and is involved in E site tRNA release. In terms of biological role, protein L1 is also a translational repressor protein, it controls the translation of the L11 operon by binding to its mRNA. The protein is Large ribosomal subunit protein uL1 of Actinobacillus pleuropneumoniae serotype 3 (strain JL03).